A 537-amino-acid polypeptide reads, in one-letter code: Probable E3 ubiquitin-protein ligase ARI3 (537 aa).

The interval 1 to 30 (MDDDYMMLDDDYGEEEDENYSEDDNYSEAE) is disordered. A TRIAD supradomain region spans residues 117–331 (KTMKCDVCME…IAGHSCGRYK (215 aa)). 18 residues coordinate Zn(2+): C121, C124, C139, H141, C144, C147, C166, C171, C210, C216, C234, C236, C241, C244, H249, C254, C281, and C284. The RING-type 1 zinc-finger motif lies at 121 to 171 (CDVCMEDDLPSNVMTRMECGHRFCNDCWIGHFTVKINEGESKRILCMAHEC). The IBR-type zinc-finger motif lies at 190–254 (DRYDRFLIES…LSESHSPCSC (65 aa)). Residues 281-309 (CPKCSKPIQKRDGCNLMTCKCGQHFCWLC) form an RING-type 2; atypical zinc finger. The active site involves C294. 6 residues coordinate Zn(2+): C299, C301, C306, C309, H317, and C327.

This sequence belongs to the RBR family. Ariadne subfamily. Requires Zn(2+) as cofactor. Ubiquitous.

It carries out the reaction [E2 ubiquitin-conjugating enzyme]-S-ubiquitinyl-L-cysteine + [acceptor protein]-L-lysine = [E2 ubiquitin-conjugating enzyme]-L-cysteine + [acceptor protein]-N(6)-ubiquitinyl-L-lysine.. The protein operates within protein modification; protein ubiquitination. Its function is as follows. Might act as an E3 ubiquitin-protein ligase, or as part of E3 complex, which accepts ubiquitin from specific E2 ubiquitin-conjugating enzymes and then transfers it to substrates. The polypeptide is Probable E3 ubiquitin-protein ligase ARI3 (ARI3) (Arabidopsis thaliana (Mouse-ear cress)).